A 292-amino-acid polypeptide reads, in one-letter code: Galactinol synthase 2 (292 aa).

K65 is an active-site residue. Residues D81, D83, and H218 each coordinate Mn(2+).

Belongs to the glycosyltransferase 8 family. Galactosyltransferase subfamily. The cofactor is a divalent metal cation. As to expression, present in phloem-associated intermediary cells. Weakly expressed in leaves.

The protein localises to the cytoplasm. The catalysed reaction is myo-inositol + UDP-alpha-D-galactose = alpha-D-galactosyl-(1-&gt;3)-1D-myo-inositol + UDP + H(+). Its function is as follows. May promote plant stress tolerance. Galactinol synthase mainly involved in the biosynthesis of transport raffinose family oligosaccharides (RFOs) that function as osmoprotectants. This Ajuga reptans (Bugle) protein is Galactinol synthase 2 (GOLS2).